Here is a 185-residue protein sequence, read N- to C-terminus: MGSQKSPYFDANSVFYIGLLYICIYETLAVSWPTNGQQTSWNNRPSYNQYYQYQRAYPGLYNRPTTAPNAYSKNSAAITTRTTYPYYRSSTYNRYPQQQQQQRWGMPRFPAFLPPLRNYQQVNRLEPFLPPPSGDRNIPLTPGVMRMLGISPHGHMMNRMGMNQPYGPDRTVGGITVDGSDVSYA.

Component of the acid-insoluble and acid-soluble organic matrix of calcified layers of the shell (at protein level).

It is found in the secreted. This is an uncharacterized protein from Lottia gigantea (Giant owl limpet).